Reading from the N-terminus, the 111-residue chain is Resistin-like beta (111 aa).

The first 23 residues, 1–23, serve as a signal peptide directing secretion; it reads MGPSSCLLLILIPLLQLINPGST. 5 cysteine pairs are disulfide-bonded: Cys55–Cys108, Cys67–Cys107, Cys76–Cys93, Cys78–Cys95, and Cys82–Cys97.

The protein belongs to the resistin/FIZZ family. As to quaternary structure, homodimer; disulfide-linked. In terms of tissue distribution, expressed only in the gastrointestinal tract, particularly the colon.

The protein localises to the secreted. Probable hormone. In Homo sapiens (Human), this protein is Resistin-like beta (RETNLB).